Here is an 81-residue protein sequence, read N- to C-terminus: Cytotoxin 4 (81 aa).

Positions 1–21 are cleaved as a signal peptide; the sequence is MKTLLLTLVVVTIVCLDLGYT. Intrachain disulfides connect Cys24-Cys42, Cys35-Cys59, Cys63-Cys74, and Cys75-Cys80.

Belongs to the three-finger toxin family. Short-chain subfamily. Type IA cytotoxin sub-subfamily. As to quaternary structure, monomer in solution; Homodimer and oligomer in the presence of negatively charged lipids forming a pore with a size ranging between 20 and 30 Angstroms. As to expression, expressed by the venom gland.

It is found in the secreted. The protein localises to the target cell membrane. In terms of biological role, basic protein that bind to cell membrane and depolarizes cardiomyocytes. This cytotoxin also shows lytic activities, but 2-fold more important than that of CTX-A2. It binds to the integrin alpha-V/beta-3 with a moderate affinity. Inhibits protein kinase C. It may interact with sulfatides in the cell membrane, which induces pore formation and cell internalization and is responsible for cytotoxicity in cardiomyocytes. It may also target the mitochondrial membrane and induces mitochondrial swelling and fragmentation. The polypeptide is Cytotoxin 4 (Naja atra (Chinese cobra)).